The sequence spans 225 residues: Heptaprenylglyceryl phosphate synthase (225 aa).

Residue lysine 6 coordinates sn-glycerol 1-phosphate. Aspartate 8 and threonine 34 together coordinate Mg(2+). Sn-glycerol 1-phosphate contacts are provided by residues 153–158 (YVEYSG), glycine 183, and 203–204 (GN).

It belongs to the GGGP/HepGP synthase family. Group I subfamily. As to quaternary structure, homodimer. Mg(2+) is required as a cofactor.

It carries out the reaction sn-glycerol 1-phosphate + all-trans-heptaprenyl diphosphate = 3-heptaprenyl-sn-glycero-1-phosphate + diphosphate. The protein operates within membrane lipid metabolism; glycerophospholipid metabolism. Its function is as follows. Prenyltransferase that catalyzes in vivo the transfer of the heptaprenyl moiety of heptaprenyl pyrophosphate (HepPP; 35 carbon atoms) to the C3 hydroxyl of sn-glycerol-1-phosphate (G1P), producing heptaprenylglyceryl phosphate (HepGP). This reaction is an ether-bond-formation step in the biosynthesis of archaea-type G1P-based membrane lipids found in Bacillales. The polypeptide is Heptaprenylglyceryl phosphate synthase (Listeria monocytogenes serotype 4b (strain CLIP80459)).